The sequence spans 61 residues: Protein translocase subunit SecE (61 aa).

Residues 1–34 lie on the Cytoplasmic side of the membrane; it reads MAELQERIRHFWKESRRAFLVTKKPNWATYKRAA. A helical transmembrane segment spans residues 35-55; it reads KITGLGIILIGLIGMLIRIVG. Over 56–61 the chain is Extracellular; sequence ILILGG.

Belongs to the SecE/SEC61-gamma family. Component of the Sec protein translocase complex. Heterotrimer consisting of alpha (SecY), beta (SecG) and gamma (SecE) subunits. The heterotrimers can form oligomers, although 1 heterotrimer is thought to be able to translocate proteins. Interacts with the ribosome. May interact with SecDF, and other proteins may be involved.

Its subcellular location is the cell membrane. Its function is as follows. Essential subunit of the protein translocation channel SecYEG. Clamps together the 2 halves of SecY. May contact the channel plug during translocation. In Pyrococcus furiosus (strain ATCC 43587 / DSM 3638 / JCM 8422 / Vc1), this protein is Protein translocase subunit SecE.